Consider the following 443-residue polypeptide: C4-dicarboxylate transport protein (443 aa).

Transmembrane regions (helical) follow at residues 10–30 (SLYF…HFYP), 46–66 (LIKM…IAGM), 78–98 (YALL…LIVV), 143–163 (IVGA…VIFG), 199–219 (PIGA…GSLV), 224–244 (LMIC…GGIC), 291–311 (VVGL…SIYL), 332–352 (ITLL…TGSG), and 354–374 (IVLA…LALI).

This sequence belongs to the dicarboxylate/amino acid:cation symporter (DAACS) (TC 2.A.23) family.

Its subcellular location is the cell inner membrane. In terms of biological role, responsible for the transport of dicarboxylates such as succinate, fumarate, and malate from the periplasm across the membrane. The polypeptide is C4-dicarboxylate transport protein (Pseudomonas fluorescens (strain SBW25)).